A 122-amino-acid polypeptide reads, in one-letter code: HLLQFGDLINKIARRNGILYYGFYGCYCGLGGRGRPQDATDRCCFVHDCCYGKVTGCDPKNDIYTYSEENGAIVCGGDNPCKKEICECDRDAAICFRDNLDTYDNKYWFFPRKYCKEESEPC.

7 cysteine pairs are disulfide-bonded: cysteine 26–cysteine 115, cysteine 28–cysteine 44, cysteine 43–cysteine 95, cysteine 49–cysteine 122, cysteine 50–cysteine 88, cysteine 57–cysteine 81, and cysteine 75–cysteine 86. Ca(2+)-binding residues include tyrosine 27, glycine 29, and glycine 31. The active site involves histidine 47. Position 48 (aspartate 48) interacts with Ca(2+). The active site involves aspartate 89.

As to quaternary structure, may form tetramers. Requires Ca(2+) as cofactor. As to expression, expressed by the venom gland.

It is found in the secreted. The catalysed reaction is a 1,2-diacyl-sn-glycero-3-phosphocholine + H2O = a 1-acyl-sn-glycero-3-phosphocholine + a fatty acid + H(+). Functionally, PLA2 catalyzes the calcium-dependent hydrolysis of the 2-acyl groups in 3-sn-phosphoglycerides. In vivo, is non-lethal to mice when intravenously injected up to a concentration of 30 ug, however does show significant edematogenic activity at the injection site. This Lachesis acrochorda (Chocoan bushmaster) protein is Acidic phospholipase A2.